The following is a 471-amino-acid chain: MSITNNMESPSDSEVRLTLNDRALWTKFCSLTNEMIVTKSGRRMFPVLKLTASGLEPNSMYSFLLDFAPADSNRWKYVNGEWVPGGKPEPHAASCVYVHPDSPNFGSHWMKQPVSFNKVKLTNKGNGGGQQIMLNSLHKYEPRIHVVKVGGEAASERTIATFSFPESQFIAVTAYQNEEVTSLKIKHNPFAKAFLDAKERPDQTDFHSLAGIPVSSPQVPSWYGRNGSTSSARHFTHCNSYGGESELTSVQDTAIPSYTSRNCMRNSYRGNARATPYTIPHKELTCQATSFPEPVPNDGFYPMFPNSELLPRTTLNNYSPAMGAYTNSSIVTSSDIQSGNNNNFFYSNNNNINTTDEVPTTYMTNDFNSFYNQSSNSGMPGTTYLPYQSSPVNQFYSYQPPYSTEIADISPTQQDIINAQNPYQTAWTPPLSYDGCSTMYNSITPYSSSGESTTSEMTLLATARYLQNLRL.

The T-box DNA-binding region spans 24–196; that stretch reads LWTKFCSLTN…HNPFAKAFLD (173 aa).

Developing notochord.

Its subcellular location is the nucleus. Functionally, involved in the transcriptional regulation of genes required for mesoderm differentiation. The polypeptide is T-box transcription factor T (Halocynthia roretzi (Sea squirt)).